The chain runs to 626 residues: UvrABC system protein C (626 aa).

Residues 26 to 105 (QEPGVYFMGD…IKQHQPHFNV (80 aa)) form the GIY-YIG domain. Positions 215 to 250 (QELHQLLTQQMEKAAADLKFEQAALIRDQINSLGKL) constitute a UVR domain.

The protein belongs to the UvrC family. In terms of assembly, interacts with UvrB in an incision complex.

It localises to the cytoplasm. Functionally, the UvrABC repair system catalyzes the recognition and processing of DNA lesions. UvrC both incises the 5' and 3' sides of the lesion. The N-terminal half is responsible for the 3' incision and the C-terminal half is responsible for the 5' incision. The chain is UvrABC system protein C from Synechocystis sp. (strain ATCC 27184 / PCC 6803 / Kazusa).